Reading from the N-terminus, the 395-residue chain is ATP phosphoribosyltransferase regulatory subunit (395 aa).

This sequence belongs to the class-II aminoacyl-tRNA synthetase family. HisZ subfamily. As to quaternary structure, heteromultimer composed of HisG and HisZ subunits.

It localises to the cytoplasm. The protein operates within amino-acid biosynthesis; L-histidine biosynthesis; L-histidine from 5-phospho-alpha-D-ribose 1-diphosphate: step 1/9. Its function is as follows. Required for the first step of histidine biosynthesis. May allow the feedback regulation of ATP phosphoribosyltransferase activity by histidine. The protein is ATP phosphoribosyltransferase regulatory subunit of Pseudomonas fluorescens (strain Pf0-1).